The chain runs to 236 residues: Opacity protein opA50 (236 aa).

Residue A1 is a signal peptide.

The protein belongs to the opacity porin family.

The protein resides in the cell outer membrane. Functionally, implicated in a number of adherence functions. OPA proteins are implicated in pathogenesis and are subject to phase variation. In Neisseria gonorrhoeae, this protein is Opacity protein opA50 (opaC).